We begin with the raw amino-acid sequence, 68 residues long: SQCQGKRSWPQLVGSTGAAAKAVIERENPRVRAVIVRVGSPVTADFRCDRVRVWVTERGIVARPPAIG.

Serine 1 carries the post-translational modification N-acetylserine. A disulfide bridge links cysteine 3 with cysteine 48.

The protein belongs to the protease inhibitor I13 (potato type I serine protease inhibitor) family.

In terms of biological role, competitively inhibits Glu S.griseus protease by forming probably a 1:1 complex. BGIA has no inhibitory activity against 2 other acidic amino acid-specific endopeptidases (S.aureus protease V8 and B.subtilis proteinase), chymotrypsin, trypsin, pancreatic elastase, and papain, although subtilisin Carlsberg was strongly inhibited. The polypeptide is Glu S.griseus protease inhibitor (Momordica charantia (Bitter gourd)).